A 313-amino-acid chain; its full sequence is Ribosomal RNA small subunit methyltransferase H (313 aa).

Residues 35–37 (GGH), Asp-55, Phe-79, Asp-100, and Gln-107 each bind S-adenosyl-L-methionine.

It belongs to the methyltransferase superfamily. RsmH family.

It is found in the cytoplasm. The catalysed reaction is cytidine(1402) in 16S rRNA + S-adenosyl-L-methionine = N(4)-methylcytidine(1402) in 16S rRNA + S-adenosyl-L-homocysteine + H(+). Functionally, specifically methylates the N4 position of cytidine in position 1402 (C1402) of 16S rRNA. In Burkholderia mallei (strain NCTC 10247), this protein is Ribosomal RNA small subunit methyltransferase H.